We begin with the raw amino-acid sequence, 192 residues long: uncharacterized protein (192 aa).

To M.thermoautotrophicum MTH863.

This is an uncharacterized protein from Methanocaldococcus jannaschii (strain ATCC 43067 / DSM 2661 / JAL-1 / JCM 10045 / NBRC 100440) (Methanococcus jannaschii).